The sequence spans 122 residues: Large ribosomal subunit protein bL12 (122 aa).

The protein belongs to the bacterial ribosomal protein bL12 family. As to quaternary structure, homodimer. Part of the ribosomal stalk of the 50S ribosomal subunit. Forms a multimeric L10(L12)X complex, where L10 forms an elongated spine to which 2 to 4 L12 dimers bind in a sequential fashion. Binds GTP-bound translation factors.

In terms of biological role, forms part of the ribosomal stalk which helps the ribosome interact with GTP-bound translation factors. Is thus essential for accurate translation. The sequence is that of Large ribosomal subunit protein bL12 from Myxococcus xanthus (strain DK1622).